We begin with the raw amino-acid sequence, 237 residues long: D-aminoacyl-tRNA deacylase (237 aa).

It belongs to the DtdA deacylase family. In terms of assembly, monomer. The cofactor is Zn(2+).

The catalysed reaction is a D-aminoacyl-tRNA + H2O = a tRNA + a D-alpha-amino acid + H(+). The enzyme catalyses glycyl-tRNA(Ala) + H2O = tRNA(Ala) + glycine + H(+). Functionally, D-aminoacyl-tRNA deacylase with broad substrate specificity. By recycling D-aminoacyl-tRNA to D-amino acids and free tRNA molecules, this enzyme counteracts the toxicity associated with the formation of D-aminoacyl-tRNA entities in vivo. This is D-aminoacyl-tRNA deacylase from Saccharolobus islandicus (strain Y.N.15.51 / Yellowstone #2) (Sulfolobus islandicus).